The primary structure comprises 539 residues: Chaperonin GroEL (539 aa).

ATP contacts are provided by residues 29–32 (TIGP), 86–90 (DGTTT), Gly413, 476–478 (NAA), and Asp492.

This sequence belongs to the chaperonin (HSP60) family. As to quaternary structure, forms a cylinder of 14 subunits composed of two heptameric rings stacked back-to-back. Interacts with the co-chaperonin GroES.

It is found in the cytoplasm. It carries out the reaction ATP + H2O + a folded polypeptide = ADP + phosphate + an unfolded polypeptide.. In terms of biological role, together with its co-chaperonin GroES, plays an essential role in assisting protein folding. The GroEL-GroES system forms a nano-cage that allows encapsulation of the non-native substrate proteins and provides a physical environment optimized to promote and accelerate protein folding. The chain is Chaperonin GroEL from Staphylococcus haemolyticus (strain JCSC1435).